We begin with the raw amino-acid sequence, 156 residues long: ATP synthase subunit b (156 aa).

A helical membrane pass occupies residues 7–26 (LIGQAIWFALFIWITMKYVW).

The protein belongs to the ATPase B chain family. As to quaternary structure, F-type ATPases have 2 components, F(1) - the catalytic core - and F(0) - the membrane proton channel. F(1) has five subunits: alpha(3), beta(3), gamma(1), delta(1), epsilon(1). F(0) has three main subunits: a(1), b(2) and c(10-14). The alpha and beta chains form an alternating ring which encloses part of the gamma chain. F(1) is attached to F(0) by a central stalk formed by the gamma and epsilon chains, while a peripheral stalk is formed by the delta and b chains.

Its subcellular location is the cell inner membrane. Its function is as follows. F(1)F(0) ATP synthase produces ATP from ADP in the presence of a proton or sodium gradient. F-type ATPases consist of two structural domains, F(1) containing the extramembraneous catalytic core and F(0) containing the membrane proton channel, linked together by a central stalk and a peripheral stalk. During catalysis, ATP synthesis in the catalytic domain of F(1) is coupled via a rotary mechanism of the central stalk subunits to proton translocation. Functionally, component of the F(0) channel, it forms part of the peripheral stalk, linking F(1) to F(0). The protein is ATP synthase subunit b of Dechloromonas aromatica (strain RCB).